Consider the following 90-residue polypeptide: Nodulation protein F (90 aa).

The 86-residue stretch at Gln4–Ala89 folds into the Carrier domain. Position 46 is an O-(pantetheine 4'-phosphoryl)serine (Ser46). A disordered region spans residues Arg65–His90. Basic residues predominate over residues Arg78 to His90.

Post-translationally, 4'-phosphopantetheine is transferred from CoA to a specific serine of apo-NodF.

Functionally, proposed to synthesize nod factor fatty acyl chain. Involved in trans-2,trans-4,trans-6,cis-11-octadecatetraenoic acid biosynthesis. The chain is Nodulation protein F (nodF) from Rhizobium meliloti (Ensifer meliloti).